A 77-amino-acid polypeptide reads, in one-letter code: Small ribosomal subunit protein bS20 (77 aa).

Positions 47-77 are disordered; sequence ASSSIDKAESKGLIHKNKASRDKARLAAKLG.

The protein belongs to the bacterial ribosomal protein bS20 family.

Binds directly to 16S ribosomal RNA. The protein is Small ribosomal subunit protein bS20 of Streptococcus pyogenes serotype M1.